The primary structure comprises 180 residues: ATP synthase subunit delta (180 aa).

It belongs to the ATPase delta chain family. F-type ATPases have 2 components, F(1) - the catalytic core - and F(0) - the membrane proton channel. F(1) has five subunits: alpha(3), beta(3), gamma(1), delta(1), epsilon(1). F(0) has three main subunits: a(1), b(2) and c(10-14). The alpha and beta chains form an alternating ring which encloses part of the gamma chain. F(1) is attached to F(0) by a central stalk formed by the gamma and epsilon chains, while a peripheral stalk is formed by the delta and b chains.

It localises to the cell membrane. In terms of biological role, f(1)F(0) ATP synthase produces ATP from ADP in the presence of a proton or sodium gradient. F-type ATPases consist of two structural domains, F(1) containing the extramembraneous catalytic core and F(0) containing the membrane proton channel, linked together by a central stalk and a peripheral stalk. During catalysis, ATP synthesis in the catalytic domain of F(1) is coupled via a rotary mechanism of the central stalk subunits to proton translocation. Its function is as follows. This protein is part of the stalk that links CF(0) to CF(1). It either transmits conformational changes from CF(0) to CF(1) or is implicated in proton conduction. This Limosilactobacillus reuteri (strain DSM 20016) (Lactobacillus reuteri) protein is ATP synthase subunit delta.